We begin with the raw amino-acid sequence, 198 residues long: MHYPEPISKLIDSFMKLPGIGPKTAIRLAFFVLTMKEDTVLEFAKSLVDVKRNIRYCTVCGHITDTDPCYICKDERRDRTTICVVQDPKDVIAMEKMKEYNGLYHVLHGAISPMEGIGPEDIKIAELLKRLQDEAVQEVILATNPNIEGEATAMYISRLLKPTGIKVTRIAHGLPVGGDLEYADEVTLSKALEGRREL.

The segment at 57–72 (CTVCGHITDTDPCYIC) adopts a C4-type zinc-finger fold. The region spanning 80-175 (TTICVVQDPK…KVTRIAHGLP (96 aa)) is the Toprim domain.

Belongs to the RecR family.

Its function is as follows. May play a role in DNA repair. It seems to be involved in an RecBC-independent recombinational process of DNA repair. It may act with RecF and RecO. The sequence is that of Recombination protein RecR from Geobacillus sp. (strain WCH70).